We begin with the raw amino-acid sequence, 596 residues long: Nuclear receptor subfamily 2 group C member 2 (596 aa).

S19 carries the post-translational modification Phosphoserine; by MAPK. S46 carries the post-translational modification Phosphoserine. A phosphoserine; by MAPK mark is found at S55 and S68. S98 carries the post-translational modification Phosphoserine. Positions 114–189 (VEYCVVCGDK…MGMKMESVQS (76 aa)) form a DNA-binding region, nuclear receptor. NR C4-type zinc fingers lie at residues 117–137 (CVVC…CEGC) and 153–177 (CRSN…LKKC). A Glycyl lysine isopeptide (Lys-Gly) (interchain with G-Cter in SUMO2) cross-link involves residue K192. Position 219 is a phosphoserine (S219). Position 231 is an N6-acetyllysine (K231). The NR LBD domain occupies 341-583 (GSIHVISRDQ…SIIPYILKME (243 aa)).

The protein belongs to the nuclear hormone receptor family. NR2 subfamily. In terms of assembly, homodimer; can bind DNA as homodimer. Heterodimer; binds DNA as a heterodimer with NR2C1 required for chromatin remodeling and for binding to promoter regions such as globin DR1 repeats. Interacts with PCAF; the interaction preferentially occurs on the non-phosphorylated form and induces NR2C2-mediated transactivation activity and does not require the ligand-binding domain. Interacts (MAPK-mediated phosphorylated form) with NRIP1; the interaction promotes repression of NR2C2-mediated activity. Interacts with NR2C2AP; the interaction represses selective NR2C2-mediated transcriptional activity. Interacts with NLRP10. Interacts (via ligand-binding region) with transcriptional corepressor JAZF1; the interaction promotes NR2C2-mediated transcriptional repression. Phosphorylation on Ser-19 and Ser-68 is an important regulator of NR2C2-mediated transcriptional activity. Phosphorylation on these residues recruits the corepressor, NRIP1, leading to transcripional repression, whereas the non-phosphorylated form preferentially recruits the coactivator, PCAF.

It localises to the nucleus. Functionally, orphan nuclear receptor that can act as a repressor or activator of transcription. An important repressor of nuclear receptor signaling pathways such as retinoic acid receptor, retinoid X, vitamin D3 receptor, thyroid hormone receptor and estrogen receptor pathways. May regulate gene expression during the late phase of spermatogenesis. Together with NR2C1, forms the core of the DRED (direct repeat erythroid-definitive) complex that represses embryonic and fetal globin transcription including that of GATA1. Binds to hormone response elements (HREs) consisting of two 5'-AGGTCA-3' half site direct repeat consensus sequences. Plays a fundamental role in early embryonic development and embryonic stem cells. Required for normal spermatogenesis and cerebellum development. Appears to be important for neurodevelopmentally regulated behavior. Activates transcriptional activity of LHCG. Antagonist of PPARA-mediated transactivation. This is Nuclear receptor subfamily 2 group C member 2 (NR2C2) from Homo sapiens (Human).